The chain runs to 392 residues: MKVTRLAVLNTLATLTVAWLPTTDKTITSSNGTDLFKASHGKIRGVNLGSQFVFEPWIATKAWSELGCEGQESEFDCVMKLGQDAANKAFAKHWDSWITKEDIKEIRSYGLNTIRIPVGYWMNEDLIYHDSEYFPHGGFAYLEKLCGWASDAGLYIIIDLHGAPGAQVAKNAFTGQFADTPGFYVDFQYQRALEFLEWMTIKVHTLHNFRNVGMLEVVNEPVQNPQVTTTLRSNYYPNAFHSIRKVEGALSIDRKDYLHIQMMDGAWGAGDPHEHLTDDYYAAYDNHRYLKWDPRVEVSKDSYIKTSCNDNVATNWPAIIGEWSLGVPDNVQETADWKPYSNLDFYQKWFAAQVQNYEQHQGWIFWTWKTQLDEYRWSYRGTYLSGFWQTSS.

The first 18 residues, 1-18, serve as a signal peptide directing secretion; it reads MKVTRLAVLNTLATLTVA. Asn31 carries an N-linked (GlcNAc...) asparagine glycan. The Proton donor role is filled by Glu220. Glu322 serves as the catalytic Nucleophile.

This sequence belongs to the glycosyl hydrolase 5 (cellulase A) family.

Its subcellular location is the secreted. It catalyses the reaction Random hydrolysis of (1-&gt;6)-linkages in (1-&gt;6)-beta-D-glucans.. Beta-glucanases participate in the metabolism of beta-glucan, the main structural component of the cell wall. Acts on lutean, pustulan and 1,6-oligo-beta-D-glucosides. The chain is Probable glucan endo-1,6-beta-glucosidase B (exgB) from Aspergillus flavus (strain ATCC 200026 / FGSC A1120 / IAM 13836 / NRRL 3357 / JCM 12722 / SRRC 167).